The chain runs to 120 residues: C-C motif chemokine 27 (120 aa).

A signal peptide spans Met1–Ala25. Cystine bridges form between Cys34/Cys63 and Cys35/Cys78.

The protein belongs to the intercrine beta (chemokine CC) family. As to quaternary structure, monomer, dimer, and tetramer. Heparin avidly promotes oligomerization. Interacts with TNFAIP6 (via Link domain). As to expression, isoform 1 is predominantly expressed in placenta and weakly in skin. Isoform 2 is predominantly expressed in testes and brain, weakly in kidney and liver and even lower in heart and muscle. Low expression of both isoforms in other tissues.

It is found in the secreted. It localises to the nucleus. Chemotactic factor that attracts skin-associated memory T-lymphocytes. May play a role in mediating homing of lymphocytes to cutaneous sites. May play a role in cell migration during embryogenesis. Nuclear forms may facilitate cellular migration by inducing cytoskeletal relaxation. Binds to CCR10. This Mus musculus (Mouse) protein is C-C motif chemokine 27 (Ccl27).